The sequence spans 462 residues: uncharacterized protein (462 aa).

Residues 12 to 70 (MLKKNDIIQVAISDLSHEGAGVAKHDGFVFFVDNALPEEVIDMRVLKVNKNSGFGKVEA) form the TRAM domain. Positions 294, 323, 344, and 392 each coordinate S-adenosyl-L-methionine. Residue C419 is the Nucleophile of the active site.

It belongs to the class I-like SAM-binding methyltransferase superfamily. RNA M5U methyltransferase family.

This is an uncharacterized protein from Streptococcus pyogenes serotype M1.